The primary structure comprises 234 residues: Segregation and condensation protein A (234 aa).

Belongs to the ScpA family. Component of a cohesin-like complex composed of ScpA, ScpB and the Smc homodimer, in which ScpA and ScpB bind to the head domain of Smc. The presence of the three proteins is required for the association of the complex with DNA.

It is found in the cytoplasm. In terms of biological role, participates in chromosomal partition during cell division. May act via the formation of a condensin-like complex containing Smc and ScpB that pull DNA away from mid-cell into both cell halves. In Streptococcus pyogenes serotype M5 (strain Manfredo), this protein is Segregation and condensation protein A.